We begin with the raw amino-acid sequence, 392 residues long: Peptidoglycan hydrolase PcsB (392 aa).

The first 27 residues, 1–27 (MKKKILASLLLSTVMVSQVAVLTTAHA), serve as a signal peptide directing secretion. Coiled-coil stretches lie at residues 34–96 (IAAQ…LSKN) and 191–227 (TKQA…AEAE). The segment at 47–267 (QQQEAQKQVD…TAQVQAVSES (221 aa)) is interacts with large extracellular loop of FtsX. One can recognise a Peptidase C51 domain in the interval 267–390 (SAAAPVRAKV…TSEGFVTYIY (124 aa)).

Homodimer. Interacts (via N-terminal coiled coil domain) with FtsX (via large extracellular loop). This interaction directs PcsB to equatorial and septal sites of dividing cells. Interacts with FtsE.

The protein localises to the cell membrane. It is found in the cell septum. Its subcellular location is the secreted. Lacks peptidoglycan-hydrolase activity in vitro, probably due to auto-inhibition by the CC domain. In the homodimer, interaction between the CC domain in one monomer and the hydrolase active site in the peptidase C51/CHAP domain in the other monomer probably mediates auto-inhibition of the hydrolase activity. In terms of biological role, peptidoglycan-hydrolase activity. Required in maintaining normal growth and cellular morphology. Involved in splitting of the septum during cell division. The polypeptide is Peptidoglycan hydrolase PcsB (Streptococcus pneumoniae serotype 2 (strain D39 / NCTC 7466)).